The following is a 254-amino-acid chain: Transmembrane protein 269 (254 aa).

Transmembrane regions (helical) follow at residues 44–64 (IINA…FCSF), 69–89 (YCAS…GTMT), 113–135 (LASA…IYVL), 171–191 (LTKG…LFMI), and 210–230 (IVYI…TAFY).

It is found in the membrane. This is Transmembrane protein 269 from Mus musculus (Mouse).